Here is a 72-residue protein sequence, read N- to C-terminus: MPKQNLHPKWYAEAKVYCDGQLIMTIGSTKSELNVDIWSGNHPFYTGSQKMLDTEGRVERFMRKYGLKENNS.

Belongs to the bacterial ribosomal protein bL31 family. Type A subfamily. In terms of assembly, part of the 50S ribosomal subunit.

The protein localises to the plastid. It localises to the chloroplast. In terms of biological role, binds the 23S rRNA. This chain is Large ribosomal subunit protein bL31c, found in Guillardia theta (Cryptophyte).